A 489-amino-acid chain; its full sequence is Occludin (489 aa).

Residues 1-51 (MMYEKRSYTGYGHPSSHYDYPPPSGPPGSFYLADVPPQHFYQWRSPPGIVR) lie on the Cytoplasmic side of the membrane. An MARVEL domain is found at 45-248 (SPPGIVRILQ…ICYFAQKTRH (204 aa)). A helical transmembrane segment spans residues 52–74 (ILQGSVVILCLVIFACVASTLAW). Residues 75-112 (EYYGSGGLLGYGGGLGSYYNGYYGGYNGYYYGGLTNPR) lie on the Extracellular side of the membrane. A helical membrane pass occupies residues 113–137 (AANGFMIAMAVLCFLVTLGLVIAGL). Over 138–147 (SKASGARSRR) the chain is Cytoplasmic. A helical membrane pass occupies residues 148–172 (FYLLVAVLSGLLAFVMLIASIVYVV). Topologically, residues 173–222 (GVNPRAGLGASSGSLYYNQMLMLCNQMMSPVAGGIMNQYLYHYCMVDPQE) are extracellular. The cysteines at positions 196 and 216 are disulfide-linked. Residues 223–244 (AVAIVCGFLTVILLCVICYFAQ) form a helical membrane-spanning segment. At 245-489 (KTRHKIWKYG…MVGGYDQSRS (245 aa)) the chain is on the cytoplasmic side. Position 280 is a phosphoserine (Ser280). Thr285 is subject to Phosphothreonine. Ser300 bears the Phosphoserine mark. The tract at residues 308-382 (PAQENGYGHS…ESSGEQNRDD (75 aa)) is disordered. Positions 322-332 (PSVPPPEGPSP) are enriched in pro residues. Positions 345–354 (PARRGHRQRP) are enriched in basic residues. Tyr364 and Tyr368 each carry phosphotyrosine. Residues 365–377 (ETDYTTAAESSGE) show a composition bias toward polar residues. Phosphothreonine; by PKC/PRKCH is present on residues Thr369 and Thr370. At Ser374 the chain carries Phosphoserine. Residues 381–489 (DDWASLYPPI…MVGGYDQSRS (109 aa)) form the OCEL domain. The stretch at 407–434 (LQRYKALCAEMDDIGTQLRQLSHELDCL) forms a coiled coil. Ser457 is modified (phosphoserine).

This sequence belongs to the ELL/occludin family. Interacts with TJP1/ZO1. Interacts with VAPA. Interacts with CLDN1, CLDN6, CLDN9, CLDN11, CLDN12 and CLDN17. Interacts with PLSCR1. Interacts with LSR, ILDR1 and ILDR2. Interacts with TJP2/ZO2. Post-translationally, dephosphorylated by PTPRJ. In terms of tissue distribution, localized at tight junctions of both epithelial and endothelial cells.

Its subcellular location is the cell membrane. It is found in the cell junction. The protein resides in the tight junction. In terms of biological role, may play a role in the formation and regulation of the tight junction (TJ) paracellular permeability barrier. This Potorous tridactylus (Potoroo) protein is Occludin (OCLN).